Here is a 220-residue protein sequence, read N- to C-terminus: Carbonic anhydrase (220 aa).

Cysteine 39, aspartate 41, histidine 98, and cysteine 101 together coordinate Zn(2+).

This sequence belongs to the beta-class carbonic anhydrase family. It depends on Zn(2+) as a cofactor.

It carries out the reaction hydrogencarbonate + H(+) = CO2 + H2O. The protein is Carbonic anhydrase (cynT) of Pseudomonas aeruginosa (strain ATCC 15692 / DSM 22644 / CIP 104116 / JCM 14847 / LMG 12228 / 1C / PRS 101 / PAO1).